We begin with the raw amino-acid sequence, 171 residues long: Dual-action ribosomal maturation protein DarP (171 aa).

Residues 1 to 30 (MPKRPAENPEQSDDFVSKSQKKREMAERQE) form a disordered region.

It belongs to the DarP family.

The protein resides in the cytoplasm. In terms of biological role, member of a network of 50S ribosomal subunit biogenesis factors which assembles along the 30S-50S interface, preventing incorrect 23S rRNA structures from forming. Promotes peptidyl transferase center (PTC) maturation. This chain is Dual-action ribosomal maturation protein DarP, found in Idiomarina loihiensis (strain ATCC BAA-735 / DSM 15497 / L2-TR).